A 93-amino-acid chain; its full sequence is Cell division protein FtsB (93 aa).

Residues 1–3 (MRI) lie on the Cytoplasmic side of the membrane. The helical transmembrane segment at 4 to 21 (FVIALTLLFGWLQYTLWF) threads the bilayer. Topologically, residues 22–93 (GKNGVSDYYT…FYRIVDEEEH (72 aa)) are periplasmic. The stretch at 31–75 (TVEDEIEVQQQVNSKLQARNNEMFAEIDDLRQGLDAIEERARHEL) forms a coiled coil.

It belongs to the FtsB family. Part of a complex composed of FtsB, FtsL and FtsQ.

The protein resides in the cell inner membrane. Its function is as follows. Essential cell division protein. May link together the upstream cell division proteins, which are predominantly cytoplasmic, with the downstream cell division proteins, which are predominantly periplasmic. This chain is Cell division protein FtsB, found in Vibrio campbellii (strain ATCC BAA-1116).